The sequence spans 240 residues: Proline-rich antigen homolog (240 aa).

Composition is skewed to pro residues over residues 1 to 31 (MTEQPPPGGSYPPPPPPPGPSGGHEPPPAAP) and 38 to 78 (APPP…PPGP). The tract at residues 1-78 (MTEQPPPGGS…GGYAPPPPGP (78 aa)) is disordered. Residues 89–233 (TPWITRVLAA…KRQTLADKIM (145 aa)) enclose the RDD domain. 3 helical membrane passes run 98–118 (AFIDWAPYVVLVGIGWVIMLV), 142–162 (SMIGQLVQWLLSVGGLAYLVW), and 203–223 (LAHFIDAIICFVGFLFPLWDA).

It belongs to the mycobacterial Pra family.

The protein resides in the cell membrane. In Mycobacterium tuberculosis (strain CDC 1551 / Oshkosh), this protein is Proline-rich antigen homolog.